The following is a 62-amino-acid chain: Omega-conotoxin-like Bu11 (62 aa).

A signal peptide spans Ala1–Ala7. Positions Glu8 to Lys27 are excised as a propeptide. 3 disulfides stabilise this stretch: Cys31-Cys46, Cys38-Cys49, and Cys45-Cys56.

Belongs to the conotoxin O1 superfamily. In terms of tissue distribution, expressed by the venom duct.

It is found in the secreted. Functionally, omega-conotoxins act at presynaptic membranes, they bind and block voltage-gated calcium channels (Cav). The sequence is that of Omega-conotoxin-like Bu11 from Conus bullatus (Bubble cone).